The chain runs to 314 residues: Bifunctional pinoresinol-lariciresinol reductase (314 aa).

NADP(+) is bound by residues 10–16 (GGTGYIG), R35, and K44. Residue K138 is the Proton acceptor of the active site. NADP(+) is bound at residue R142. H270 is a binding site for substrate.

This sequence belongs to the NmrA-type oxidoreductase family. Isoflavone reductase subfamily. Dimer.

The catalysed reaction is (+)-lariciresinol + NADP(+) = (+)-pinoresinol + NADPH + H(+). The enzyme catalyses (+)-secoisolariciresinol + NADP(+) = (-)-lariciresinol + NADPH + H(+). Reductase involved in the lignan justicidin B biosynthesis. Catalyzes the enantioselective conversion of (+)-pinoresinol into (+)-lariciresinol and of (-)-lariciresinol into (+)-secoisolariciresinol. Low activity with the other enantiomers. Abstracts the 4R-hydride from the NADPH cofactor during catalysis. This chain is Bifunctional pinoresinol-lariciresinol reductase (PLR_Lp1), found in Linum perenne (Perennial flax).